Reading from the N-terminus, the 74-residue chain is Protein krueppel (74 aa).

4 C2H2-type zinc fingers span residues 1 to 4 (ERTH), 10 to 32 (FECP…MRLH), 38 to 60 (YHCS…LRVH), and 66 to 74 (YTCEICDGK).

The protein belongs to the krueppel C2H2-type zinc-finger protein family.

Its subcellular location is the nucleus. In terms of biological role, krueppel is a gap class segmentation protein. This chain is Protein krueppel (Kr), found in Musca domestica (House fly).